A 569-amino-acid polypeptide reads, in one-letter code: 2-succinyl-5-enolpyruvyl-6-hydroxy-3-cyclohexene-1-carboxylate synthase (569 aa).

This sequence belongs to the TPP enzyme family. MenD subfamily. As to quaternary structure, homodimer. The cofactor is Mg(2+). It depends on Mn(2+) as a cofactor. Thiamine diphosphate serves as cofactor.

It carries out the reaction isochorismate + 2-oxoglutarate + H(+) = 5-enolpyruvoyl-6-hydroxy-2-succinyl-cyclohex-3-ene-1-carboxylate + CO2. It functions in the pathway quinol/quinone metabolism; 1,4-dihydroxy-2-naphthoate biosynthesis; 1,4-dihydroxy-2-naphthoate from chorismate: step 2/7. Its pathway is cofactor biosynthesis; phylloquinone biosynthesis. Functionally, catalyzes the thiamine diphosphate-dependent decarboxylation of 2-oxoglutarate and the subsequent addition of the resulting succinic semialdehyde-thiamine pyrophosphate anion to isochorismate to yield 2-succinyl-5-enolpyruvyl-6-hydroxy-3-cyclohexene-1-carboxylate (SEPHCHC). The chain is 2-succinyl-5-enolpyruvyl-6-hydroxy-3-cyclohexene-1-carboxylate synthase from Microcystis aeruginosa (strain NIES-843 / IAM M-2473).